Consider the following 66-residue polypeptide: MAKGKDVRVTIILECTSCVRNDIKKESAGISRYITQKNRHNTPSRLELRKFCPYCSKHTIHGEIKK.

Belongs to the bacterial ribosomal protein bL33 family.

Its subcellular location is the plastid. It is found in the chloroplast. The polypeptide is Large ribosomal subunit protein bL33c (Barbarea verna (Land cress)).